The following is a 400-amino-acid chain: S-adenosylmethionine sensor upstream of mTORC1 (400 aa).

S-adenosyl-L-methionine contacts are provided by Arg-99, Gly-168, Asp-186, Asp-198, Phe-199, and Ser-240.

This sequence belongs to the BMT2/SAMTOR family. Interacts with the GATOR1 complex; interaction is disrupted when samtor binds S-adenosyl-L-methionine. Interacts with the KICSTOR complex; interaction is disrupted when samtor binds S-adenosyl-L-methionine.

S-adenosyl-L-methionine-binding protein that acts as an inhibitor of mTORC1 signaling via interaction with the GATOR1 and KICSTOR complexes. Acts as a sensor of S-adenosyl-L-methionine to signal methionine sufficiency to mTORC1: in presence of methionine, binds S-adenosyl-L-methionine, leading to disrupt interaction with the GATOR1 and KICSTOR complexes and promote mTORC1 signaling. Upon methionine starvation, S-adenosyl-L-methionine levels are reduced, thereby promoting the association with GATOR1 and KICSTOR, leading to inhibit mTORC1 signaling. Probably also acts as a S-adenosyl-L-methionine-dependent methyltransferase. In Xenopus tropicalis (Western clawed frog), this protein is S-adenosylmethionine sensor upstream of mTORC1.